Here is a 245-residue protein sequence, read N- to C-terminus: Octanoyltransferase (245 aa).

The 189-residue stretch at 54–242 (QNAPEQVWLL…AFEQIFGPTI (189 aa)) folds into the BPL/LPL catalytic domain. Residues 93 to 100 (RGGEFTYH), 173 to 175 (AIG), and 186 to 188 (GVS) contribute to the substrate site. The active-site Acyl-thioester intermediate is Cys204.

It belongs to the LipB family.

The protein localises to the cytoplasm. It catalyses the reaction octanoyl-[ACP] + L-lysyl-[protein] = N(6)-octanoyl-L-lysyl-[protein] + holo-[ACP] + H(+). It functions in the pathway protein modification; protein lipoylation via endogenous pathway; protein N(6)-(lipoyl)lysine from octanoyl-[acyl-carrier-protein]: step 1/2. Its function is as follows. Catalyzes the transfer of endogenously produced octanoic acid from octanoyl-acyl-carrier-protein onto the lipoyl domains of lipoate-dependent enzymes. Lipoyl-ACP can also act as a substrate although octanoyl-ACP is likely to be the physiological substrate. The protein is Octanoyltransferase of Bartonella quintana (strain Toulouse) (Rochalimaea quintana).